A 122-amino-acid polypeptide reads, in one-letter code: Large ribosomal subunit protein uL14 (122 aa).

The protein belongs to the universal ribosomal protein uL14 family. Part of the 50S ribosomal subunit. Forms a cluster with proteins L3 and L19. In the 70S ribosome, L14 and L19 interact and together make contacts with the 16S rRNA in bridges B5 and B8.

Its function is as follows. Binds to 23S rRNA. Forms part of two intersubunit bridges in the 70S ribosome. In Neisseria gonorrhoeae (strain ATCC 700825 / FA 1090), this protein is Large ribosomal subunit protein uL14.